The primary structure comprises 225 residues: Uracil-DNA glycosylase (225 aa).

D65 serves as the catalytic Proton acceptor.

The protein belongs to the uracil-DNA glycosylase (UDG) superfamily. UNG family.

Its subcellular location is the cytoplasm. The catalysed reaction is Hydrolyzes single-stranded DNA or mismatched double-stranded DNA and polynucleotides, releasing free uracil.. Functionally, excises uracil residues from the DNA which can arise as a result of misincorporation of dUMP residues by DNA polymerase or due to deamination of cytosine. The chain is Uracil-DNA glycosylase from Bacillus thuringiensis subsp. konkukian (strain 97-27).